Consider the following 264-residue polypeptide: Thymidylate synthase (264 aa).

Position 21 (R21) interacts with dUMP. H51 contributes to the (6R)-5,10-methylene-5,6,7,8-tetrahydrofolate binding site. 126-127 serves as a coordination point for dUMP; that stretch reads RR. C146 acts as the Nucleophile in catalysis. DUMP is bound by residues 166 to 169, N177, and 207 to 209; these read RSCD and HLY. Position 169 (D169) interacts with (6R)-5,10-methylene-5,6,7,8-tetrahydrofolate. A263 contacts (6R)-5,10-methylene-5,6,7,8-tetrahydrofolate.

It belongs to the thymidylate synthase family. Bacterial-type ThyA subfamily. In terms of assembly, homodimer.

The protein resides in the cytoplasm. The enzyme catalyses dUMP + (6R)-5,10-methylene-5,6,7,8-tetrahydrofolate = 7,8-dihydrofolate + dTMP. It participates in pyrimidine metabolism; dTTP biosynthesis. In terms of biological role, catalyzes the reductive methylation of 2'-deoxyuridine-5'-monophosphate (dUMP) to 2'-deoxythymidine-5'-monophosphate (dTMP) while utilizing 5,10-methylenetetrahydrofolate (mTHF) as the methyl donor and reductant in the reaction, yielding dihydrofolate (DHF) as a by-product. This enzymatic reaction provides an intracellular de novo source of dTMP, an essential precursor for DNA biosynthesis. In Baumannia cicadellinicola subsp. Homalodisca coagulata, this protein is Thymidylate synthase.